Consider the following 523-residue polypeptide: MSQQVIIFDTTLRDGEQALQASLSAKEKLQIALALERMGVDVMEVGFPVSSPGDFESVQTIARTIKNSRVCALARCVEKDIDVAAQALKVADAFRIHTFIATSPMHIATKLRSTLDEVIERAVYMVKRARNYTDDVEFSCEDAGRTPVDDLARVVEAAINAGARTINIPDTVGYTMPFEFAGIISGLYERVPNIDKAIISVHTHDDLGIAVGNSLAAVHAGARQVEGAMNGIGERAGNCALEEVIMAIKVRKDIMNVHTNINHHEIWRTSQTVSQICNMPIPANKAIVGSGAFAHSSGIHQDGVLKNRENYEIMTPESIGLNQIQLNLTSRSGRAAVKHRMEEMGYKDTDYNMDHLYDAFLKLADKKGQVFDYDLEALAFINKQQEEPEHFRLDYFSVQSGSSDIATASVKLACGEEIKAEAANGNGPVDAIYQAINRITGYDVELVKYDLNAKGQGKDALGQVDIVVNHHGRRFHGVGLATDIVESSAKAMMHVLNNIWRAAEVEKELQRKAQNKENNKETV.

In terms of domain architecture, Pyruvate carboxyltransferase spans 5–267 (VIIFDTTLRD…HTNINHHEIW (263 aa)). Residues D14, H202, H204, and N238 each coordinate Mn(2+). The interval 392–523 (RLDYFSVQSG…QNKENNKETV (132 aa)) is regulatory domain.

This sequence belongs to the alpha-IPM synthase/homocitrate synthase family. LeuA type 1 subfamily. In terms of assembly, homodimer. It depends on Mn(2+) as a cofactor.

It is found in the cytoplasm. It carries out the reaction 3-methyl-2-oxobutanoate + acetyl-CoA + H2O = (2S)-2-isopropylmalate + CoA + H(+). Its pathway is amino-acid biosynthesis; L-leucine biosynthesis; L-leucine from 3-methyl-2-oxobutanoate: step 1/4. Functionally, catalyzes the condensation of the acetyl group of acetyl-CoA with 3-methyl-2-oxobutanoate (2-ketoisovalerate) to form 3-carboxy-3-hydroxy-4-methylpentanoate (2-isopropylmalate). The sequence is that of 2-isopropylmalate synthase from Salmonella paratyphi A (strain ATCC 9150 / SARB42).